Consider the following 346-residue polypeptide: Isopentenyl-diphosphate delta-isomerase (346 aa).

Position 12–13 (12–13 (RK)) interacts with substrate. FMN contacts are provided by residues 67–69 (ALT), S97, and N126. 97–99 (SQR) is a substrate binding site. Substrate is bound at residue Q156. E157 contacts Mg(2+). FMN contacts are provided by residues K188, T218, 263 to 265 (GIR), and 284 to 285 (AG).

It belongs to the IPP isomerase type 2 family. Homooctamer. Dimer of tetramers. FMN serves as cofactor. NADPH is required as a cofactor. Requires Mg(2+) as cofactor.

The protein resides in the cytoplasm. It catalyses the reaction isopentenyl diphosphate = dimethylallyl diphosphate. Its function is as follows. Involved in the biosynthesis of isoprenoids. Catalyzes the 1,3-allylic rearrangement of the homoallylic substrate isopentenyl (IPP) to its allylic isomer, dimethylallyl diphosphate (DMAPP). This Moorella thermoacetica (strain ATCC 39073 / JCM 9320) protein is Isopentenyl-diphosphate delta-isomerase.